A 20-amino-acid polypeptide reads, in one-letter code: U1-poneritoxin-Ni1a (20 aa).

Residue K20 is modified to Lysine amide.

This sequence belongs to the non-disulfide-bridged peptide (NDBP) superfamily. Medium-length antimicrobial peptide (group 3) family. Ponericin-W subfamily. As to expression, expressed by the venom gland.

Its subcellular location is the secreted. The protein localises to the target cell membrane. Has activity against Gram-positive bacteria. Has insecticidal and hemolytic activities. May act by disrupting the integrity of the bacterial cell membrane. This Neoponera inversa (Ant) protein is U1-poneritoxin-Ni1a.